Reading from the N-terminus, the 37-residue chain is Chitinase-like protein (37 aa).

The interval 1 to 20 is disordered; the sequence is VLLSVGGDADTESPEKKNLG. The GH18 domain maps to 1–37; the sequence is VLLSVGGDADTESPEKKNLGGVSIVDLSMDDFRGLLT.

This sequence belongs to the glycosyl hydrolase 18 family. IDGF subfamily. Glycosylated.

The protein resides in the secreted. Its function is as follows. Cooperates with insulin-like peptides to stimulate the proliferation, polarization and motility of imaginal disk cells. May act by stabilizing the binding of insulin-like peptides to its receptor through a simultaneous interaction with both molecules to form a multiprotein signaling complex. In Heliothis virescens (Tobacco budworm moth), this protein is Chitinase-like protein.